The sequence spans 422 residues: Protein FAM53B (422 aa).

Residues serine 118, serine 167, serine 169, serine 179, serine 212, and serine 268 each carry the phosphoserine modification. Over residues 245–268 (SANSTPASTPELARRSSGLSRSRS) the composition is skewed to low complexity. The segment at 245 to 269 (SANSTPASTPELARRSSGLSRSRSQ) is disordered. Positions 281–284 (KRRR) match the Nuclear localization signal motif.

Belongs to the FAM53 family. As to quaternary structure, interacts with CTNNB1. As to expression, detected in skeletal muscle, kidney, spleen, thyroid, testis, ovary, small intestine, colon and peripheral blood.

It localises to the nucleus. Its function is as follows. Acts as a regulator of Wnt signaling pathway by regulating beta-catenin (CTNNB1) nuclear localization. This is Protein FAM53B from Homo sapiens (Human).